Here is a 387-residue protein sequence, read N- to C-terminus: 1-deoxy-D-xylulose 5-phosphate reductoisomerase (387 aa).

The NADPH site is built by Thr-10, Gly-11, Ile-13, Asn-38, and Asn-122. Lys-123 serves as a coordination point for 1-deoxy-D-xylulose 5-phosphate. Residue Glu-124 coordinates NADPH. Asp-148 provides a ligand contact to Mn(2+). Ser-149, Glu-150, Ser-174, and His-197 together coordinate 1-deoxy-D-xylulose 5-phosphate. Glu-150 contacts Mn(2+). Position 203 (Gly-203) interacts with NADPH. 1-deoxy-D-xylulose 5-phosphate is bound by residues Ser-210, Asn-215, Lys-216, and Glu-219. Residue Glu-219 participates in Mn(2+) binding.

It belongs to the DXR family. Mg(2+) serves as cofactor. Requires Mn(2+) as cofactor.

The catalysed reaction is 2-C-methyl-D-erythritol 4-phosphate + NADP(+) = 1-deoxy-D-xylulose 5-phosphate + NADPH + H(+). It participates in isoprenoid biosynthesis; isopentenyl diphosphate biosynthesis via DXP pathway; isopentenyl diphosphate from 1-deoxy-D-xylulose 5-phosphate: step 1/6. Its function is as follows. Catalyzes the NADPH-dependent rearrangement and reduction of 1-deoxy-D-xylulose-5-phosphate (DXP) to 2-C-methyl-D-erythritol 4-phosphate (MEP). This Ehrlichia ruminantium (strain Welgevonden) protein is 1-deoxy-D-xylulose 5-phosphate reductoisomerase.